We begin with the raw amino-acid sequence, 809 residues long: Protein TOC75, chloroplastic (809 aa).

Over residues 1 to 17 the composition is skewed to polar residues; that stretch reads MRTSVIPNRLTPTLTTH. A chloroplast-targeting transit peptide spans 1-35; the sequence is MRTSVIPNRLTPTLTTHPSRRRNDHITTRTSSLKC. A disordered region spans residues 1-44; that stretch reads MRTSVIPNRLTPTLTTHPSRRRNDHITTRTSSLKCHLSPSSGDN. The transit peptide at 36 to 131 directs the protein to the chloroplast; outer membrane; sequence HLSPSSGDNN…RILSPARAIA (96 aa). At 132-143 the chain is on the chloroplast intermembrane side; it reads DEPKSEDWDSHE. The chain crosses the membrane as a beta stranded span at residues 144–152; the sequence is LPADITVLL. Over 153–160 the chain is Cytoplasmic; the sequence is GRLSGFKK. The chain crosses the membrane as a beta stranded span at residues 161 to 169; it reads YKISDILFF. Residues 170-225 are Chloroplast intermembrane-facing; that stretch reads DRNKKSKVETQDSFLDMVSLKPGGVYTKAQLQKELESLATCGMFEKVDMEGKTNAD. Residues 226–234 form a beta stranded membrane-spanning segment; the sequence is GSLGLTISF. Over 235 to 247 the chain is Cytoplasmic; that stretch reads AESMWERADRFRC. A beta stranded transmembrane segment spans residues 248 to 254; it reads INVGLMG. The Chloroplast intermembrane portion of the chain corresponds to 255–357; sequence QSKPVEMDPD…VVCEVVEGDI (103 aa). The chain crosses the membrane as a beta stranded span at residues 358 to 365; sequence TKLSIQYL. The Cytoplasmic segment spans residues 366–410; sequence DKLGNVVEGNTEGPVVQRELPKQLLPGHTFNIEAGKQALRNINSL. Residues 411 to 418 traverse the membrane as a beta stranded segment; the sequence is ALFSNIEV. The Chloroplast intermembrane portion of the chain corresponds to 419–427; sequence NPRPDEMNE. The chain crosses the membrane as a beta stranded span at residues 428–436; that stretch reads GSIIVEIKL. The Cytoplasmic segment spans residues 437–442; the sequence is KELEQK. The chain crosses the membrane as a beta stranded span at residues 443–452; that stretch reads SAEVSTEWSI. The Chloroplast intermembrane segment spans residues 453–464; that stretch reads VPGRGGRPTLAS. The chain crosses the membrane as a beta stranded span at residues 465-473; it reads LQPGGTITF. The Cytoplasmic portion of the chain corresponds to 474–500; the sequence is EHRNLQGLNRSLTGSVTTSNFLNPQDD. A beta stranded membrane pass occupies residues 501-509; that stretch reads LAFKMEYAH. The Chloroplast intermembrane segment spans residues 510 to 553; that stretch reads PYLDGVDNPRNRTLRVSCFNSRKLSPVFTGGPGVDEVPSIWVDR. A beta stranded transmembrane segment spans residues 554–561; the sequence is AGVKANIT. The Cytoplasmic segment spans residues 562 to 569; sequence ENFSRQSK. Residues 570–577 form a beta stranded membrane-spanning segment; the sequence is FTYGLVME. The Chloroplast intermembrane segment spans residues 578 to 684; sequence EIITRDESNH…VEEGAGKSPP (107 aa). Residues 685-693 form a beta stranded membrane-spanning segment; it reads PVLVLHGHY. Topologically, residues 694 to 705 are cytoplasmic; the sequence is GGCVGDLPSYDA. A beta stranded transmembrane segment spans residues 706 to 714; the sequence is FTLGGPYSV. The Chloroplast intermembrane portion of the chain corresponds to 715–776; that stretch reads RGYNMGEIGA…VYRRMGQGSS (62 aa). Residues 777–783 traverse the membrane as a beta stranded segment; that stretch reads YGAGMKL. Residues 784–797 lie on the Cytoplasmic side of the membrane; it reads GLVRAEYAVDHNSG. The chain crosses the membrane as a beta stranded span at residues 798-805; that stretch reads TGAVFFRF. Over 806-809 the chain is Chloroplast intermembrane; it reads GERF.

This sequence belongs to the TOC75 family. Part of the TOC core complex that includes a protein for the specific recognition of transit peptides surrounded by a ring composed of four proteins forming translocation channels, and four to five GTP-binding proteins providing energy. This core complex can interact with components of the TIC complex to form a larger import complex. Chloroplastic protein precursors such as prSS (precursor of the RuBisCO small subunit) also interact with these complexes. TOC75 interacts with OEP14, TOC34/OEP34, TOC86/OEP86, TIC55, TIC110/IEP110 and CLPC. In terms of tissue distribution, mostly expressed in young leaves, also present in old leaves, roots and stems (at protein level).

It localises to the plastid. It is found in the chloroplast outer membrane. In terms of biological role, mediates the insertion of proteins targeted to the outer membrane of chloroplasts. Required for the import of protein precursors into chloroplasts. Forms the voltage-dependent preprotein translocation channels (hydrophilic beta barrel) of the TOC complex in the chloroplastic outer membrane. The narrowest inner diameter of this channel is approximately 14 Angstroms. In Pisum sativum (Garden pea), this protein is Protein TOC75, chloroplastic (TOC75).